Here is a 780-residue protein sequence, read N- to C-terminus: Tricorn protease-interacting factor F3 (780 aa).

Residues Glu-101 and 230–234 each bind substrate; that span reads GAMEN. His-265 lines the Zn(2+) pocket. The Proton acceptor role is filled by Glu-266. Residues His-269 and Glu-288 each coordinate Zn(2+).

It belongs to the peptidase M1 family. In terms of assembly, part of the tricorn proteolytic complex. Zn(2+) is required as a cofactor.

The protein resides in the cytoplasm. Functionally, proteases F1, F2 and F3 degrade oligopeptides produced by Tricorn (themselves probably produced by the proteasome), yielding free amino acids. The protein is Tricorn protease-interacting factor F3 (trf3) of Thermoplasma acidophilum (strain ATCC 25905 / DSM 1728 / JCM 9062 / NBRC 15155 / AMRC-C165).